We begin with the raw amino-acid sequence, 386 residues long: Phosphoglycerate kinase (386 aa).

Substrate contacts are provided by residues 21-23 (DLN), arginine 36, 59-62 (HLGR), arginine 113, and arginine 146. Residues lysine 197, glutamate 313, and 339 to 342 (GGDT) each bind ATP.

This sequence belongs to the phosphoglycerate kinase family. Monomer.

The protein localises to the cytoplasm. It catalyses the reaction (2R)-3-phosphoglycerate + ATP = (2R)-3-phospho-glyceroyl phosphate + ADP. The protein operates within carbohydrate degradation; glycolysis; pyruvate from D-glyceraldehyde 3-phosphate: step 2/5. In Serratia proteamaculans (strain 568), this protein is Phosphoglycerate kinase.